The chain runs to 261 residues: Carbonic anhydrase 1 (261 aa).

The segment at 1–31 is disordered; the sequence is MASPDWGYDDKNGPEQWSKLYPIANGNNQSP. Ala2 carries the N-acetylalanine modification. The Alpha-carbonic anhydrase domain maps to 4-261; sequence PDWGYDDKNG…LKGRTVRASF (258 aa). His65 acts as the Proton donor/acceptor in catalysis. Residues His95, His97, and His120 each contribute to the Zn(2+) site. Substrate contacts are provided by residues Thr200 and 200–201; that span reads TH. Positions 240-261 are disordered; sequence VPMQHNNRPTQPLKGRTVRASF.

Belongs to the alpha-carbonic anhydrase family. Zn(2+) serves as cofactor.

It localises to the cytoplasm. It carries out the reaction hydrogencarbonate + H(+) = CO2 + H2O. The enzyme catalyses urea = cyanamide + H2O. Its activity is regulated as follows. Inhibited by acetazolamide. In terms of biological role, catalyzes the reversible hydration of carbon dioxide. Can hydrate cyanamide to urea. The chain is Carbonic anhydrase 1 (CA1) from Gorilla gorilla gorilla (Western lowland gorilla).